The sequence spans 231 residues: Probable septum site-determining protein MinC (231 aa).

A disordered region spans residues 101–125 (GKEKAPRPAPTPQAPAQNTTPVTKT). Low complexity predominate over residues 114-123 (APAQNTTPVT).

The protein belongs to the MinC family. As to quaternary structure, interacts with MinD and FtsZ.

Cell division inhibitor that blocks the formation of polar Z ring septums. Rapidly oscillates between the poles of the cell to destabilize FtsZ filaments that have formed before they mature into polar Z rings. Prevents FtsZ polymerization. In Escherichia coli (strain ATCC 8739 / DSM 1576 / NBRC 3972 / NCIMB 8545 / WDCM 00012 / Crooks), this protein is Probable septum site-determining protein MinC.